The following is a 252-amino-acid chain: Triosephosphate isomerase (252 aa).

10 to 12 (NWK) serves as a coordination point for substrate. Residue His96 is the Electrophile of the active site. Glu168 serves as the catalytic Proton acceptor. Residues Gly174, Ser214, and 235–236 (GG) contribute to the substrate site.

The protein belongs to the triosephosphate isomerase family. In terms of assembly, homodimer.

It is found in the cytoplasm. It catalyses the reaction D-glyceraldehyde 3-phosphate = dihydroxyacetone phosphate. It functions in the pathway carbohydrate biosynthesis; gluconeogenesis. It participates in carbohydrate degradation; glycolysis; D-glyceraldehyde 3-phosphate from glycerone phosphate: step 1/1. Its function is as follows. Involved in the gluconeogenesis. Catalyzes stereospecifically the conversion of dihydroxyacetone phosphate (DHAP) to D-glyceraldehyde-3-phosphate (G3P). The chain is Triosephosphate isomerase from Streptococcus mutans serotype c (strain ATCC 700610 / UA159).